A 335-amino-acid polypeptide reads, in one-letter code: Pro-cathepsin H (335 aa).

The first 22 residues, 1–22 (MWAVLSLLCAGAWLLGPPACGA), serve as a signal peptide directing secretion. Positions 23–97 (SNLAVSSFEK…DEIRHKYLWS (75 aa)) are excised as a propeptide. Residues asparagine 72 and asparagine 101 are each glycosylated (N-linked (GlcNAc...) asparagine). 4 disulfide bridges follow: cysteine 102–cysteine 327, cysteine 138–cysteine 181, cysteine 172–cysteine 214, and cysteine 272–cysteine 322. The propeptide occupies 107–115 (GNYLRGTGP). Residue cysteine 141 is part of the active site. Asparagine 230 carries an N-linked (GlcNAc...) asparagine glycan. Catalysis depends on residues histidine 281 and asparagine 301.

This sequence belongs to the peptidase C1 family. Composed of cathepsin H and mini chain; disulfide-linked. Cathepsin H may be split into heavy and light chain. All chains are held together by disulfide bonds.

The protein resides in the lysosome. It carries out the reaction Hydrolysis of proteins, acting as an aminopeptidase (notably, cleaving Arg-|-Xaa bonds) as well as an endopeptidase.. In terms of biological role, important for the overall degradation of proteins in lysosomes. This chain is Pro-cathepsin H (CTSH), found in Sus scrofa (Pig).